The following is a 454-amino-acid chain: UDP-N-acetylmuramoylalanine--D-glutamate ligase (454 aa).

An ATP-binding site is contributed by 115–121 (GTNGKTT).

It belongs to the MurCDEF family.

It localises to the cytoplasm. The catalysed reaction is UDP-N-acetyl-alpha-D-muramoyl-L-alanine + D-glutamate + ATP = UDP-N-acetyl-alpha-D-muramoyl-L-alanyl-D-glutamate + ADP + phosphate + H(+). It participates in cell wall biogenesis; peptidoglycan biosynthesis. In terms of biological role, cell wall formation. Catalyzes the addition of glutamate to the nucleotide precursor UDP-N-acetylmuramoyl-L-alanine (UMA). The protein is UDP-N-acetylmuramoylalanine--D-glutamate ligase of Thermoanaerobacter sp. (strain X514).